Here is a 382-residue protein sequence, read N- to C-terminus: 4-hydroxy-3-methylbut-2-en-1-yl diphosphate synthase (flavodoxin) (382 aa).

C273, C276, C308, and E315 together coordinate [4Fe-4S] cluster.

Belongs to the IspG family. [4Fe-4S] cluster serves as cofactor.

The enzyme catalyses (2E)-4-hydroxy-3-methylbut-2-enyl diphosphate + oxidized [flavodoxin] + H2O + 2 H(+) = 2-C-methyl-D-erythritol 2,4-cyclic diphosphate + reduced [flavodoxin]. It participates in isoprenoid biosynthesis; isopentenyl diphosphate biosynthesis via DXP pathway; isopentenyl diphosphate from 1-deoxy-D-xylulose 5-phosphate: step 5/6. In terms of biological role, converts 2C-methyl-D-erythritol 2,4-cyclodiphosphate (ME-2,4cPP) into 1-hydroxy-2-methyl-2-(E)-butenyl 4-diphosphate. The protein is 4-hydroxy-3-methylbut-2-en-1-yl diphosphate synthase (flavodoxin) of Gluconacetobacter diazotrophicus (strain ATCC 49037 / DSM 5601 / CCUG 37298 / CIP 103539 / LMG 7603 / PAl5).